The chain runs to 333 residues: Dehydrodolichyl diphosphate synthase complex subunit Dhdds (333 aa).

(2E,6E)-farnesyl diphosphate contacts are provided by Asp34, Gly35, Arg37, Arg38, and Arg85. Asp34 contacts Mg(2+). Isopentenyl diphosphate contacts are provided by Arg38, Arg85, Arg205, Arg211, and Ser213.

This sequence belongs to the UPP synthase family. In terms of assembly, the active dehydrodolichyl diphosphate synthase complex is a heterotetramer composed of a dimer of heterodimer of DHDDS and NUS1. Interacts with NPC2. Requires Mg(2+) as cofactor.

The protein resides in the endoplasmic reticulum membrane. The enzyme catalyses n isopentenyl diphosphate + (2E,6E)-farnesyl diphosphate = a di-trans,poly-cis-polyprenyl diphosphate + n diphosphate. It participates in protein modification; protein glycosylation. It functions in the pathway lipid metabolism. With NUS1, forms the dehydrodolichyl diphosphate synthase (DDS) complex, an essential component of the dolichol monophosphate (Dol-P) biosynthetic machinery. Both subunits contribute to enzymatic activity, i.e. condensation of multiple copies of isopentenyl pyrophosphate (IPP) to farnesyl pyrophosphate (FPP) to produce dehydrodolichyl diphosphate (Dedol-PP), a precursor of dolichol phosphate which is utilized as a sugar carrier in protein glycosylation in the endoplasmic reticulum (ER). Synthesizes long-chain polyprenols, mostly of C95 and C100 chain length. Regulates the glycosylation and stability of nascent NPC2, thereby promoting trafficking of LDL-derived cholesterol. This is Dehydrodolichyl diphosphate synthase complex subunit Dhdds from Mus musculus (Mouse).